The sequence spans 185 residues: Ribosome maturation factor RimM (185 aa).

Residues 103–177 enclose the PRC barrel domain; the sequence is SEEYYWYEIL…SIIVKKIEWY (75 aa).

Belongs to the RimM family. Binds ribosomal protein uS19.

It localises to the cytoplasm. An accessory protein needed during the final step in the assembly of 30S ribosomal subunit, possibly for assembly of the head region. Essential for efficient processing of 16S rRNA. May be needed both before and after RbfA during the maturation of 16S rRNA. It has affinity for free ribosomal 30S subunits but not for 70S ribosomes. The polypeptide is Ribosome maturation factor RimM (Petrotoga mobilis (strain DSM 10674 / SJ95)).